The chain runs to 180 residues: Probable RNA 2'-phosphotransferase (180 aa).

This sequence belongs to the KptA/TPT1 family.

Its function is as follows. Removes the 2'-phosphate from RNA via an intermediate in which the phosphate is ADP-ribosylated by NAD followed by a presumed transesterification to release the RNA and generate ADP-ribose 1''-2''-cyclic phosphate (APPR&gt;P). May function as an ADP-ribosylase. The polypeptide is Probable RNA 2'-phosphotransferase (Pectobacterium atrosepticum (strain SCRI 1043 / ATCC BAA-672) (Erwinia carotovora subsp. atroseptica)).